Here is a 145-residue protein sequence, read N- to C-terminus: UPF0179 protein Maeo_1037 (145 aa).

Belongs to the UPF0179 family.

This chain is UPF0179 protein Maeo_1037, found in Methanococcus aeolicus (strain ATCC BAA-1280 / DSM 17508 / OCM 812 / Nankai-3).